Here is a 436-residue protein sequence, read N- to C-terminus: MANVVVIGAQWGDEGKGKITDLLSRSADVVVRYQGGVNAGHTIVVDDKVLKLHLIPSGILYKNTSCLIGSGTVVDPKILLKEIDMLIDNGIDISGLKISSTSHVTMPYHRILDEAMEADRGSNKIGTTGRGIGPTYADKSQRNGIRIRDLLNNERLKDVIEIPLREKNGLLEKIYGIKPLKLEDILEEYLDYGERLSKHVVDCTRTIHAASKNKKNILFEGAQGTLLDLDHGTYPFVTSSNPISGGACIGAGVGPTLIDRVIGVAKAYTTRVGEGPFPTELQGSINDQLCDRGSEFGTTTGRRRRCGWFDGVIGKYAVSVNGLDCLAVTKLDVLDELDEIQVCIAYDLDGEEIDYFPTNSDDLKKCKPIFKKLKGWQCSTADCRKLSDLPQNAMNYLRFLAELMEVPIAIVSLGANRDQTIVIEDPIHGPKRALLR.

GTP-binding positions include 12-18 (GDEGKGK) and 40-42 (GHT). Asp-13 functions as the Proton acceptor in the catalytic mechanism. The Mg(2+) site is built by Asp-13 and Gly-40. IMP contacts are provided by residues 13–16 (DEGK), 38–41 (NAGH), Thr-128, Arg-142, Gln-223, Thr-238, and Arg-302. His-41 functions as the Proton donor in the catalytic mechanism. Substrate is bound at residue 298-304 (TTTGRRR). Residues Arg-304, 330-332 (KLD), and 412-414 (SLG) each bind GTP.

It belongs to the adenylosuccinate synthetase family. As to quaternary structure, homodimer. Mg(2+) is required as a cofactor.

The protein resides in the cytoplasm. It catalyses the reaction IMP + L-aspartate + GTP = N(6)-(1,2-dicarboxyethyl)-AMP + GDP + phosphate + 2 H(+). The protein operates within purine metabolism; AMP biosynthesis via de novo pathway; AMP from IMP: step 1/2. Plays an important role in the de novo pathway of purine nucleotide biosynthesis. Catalyzes the first committed step in the biosynthesis of AMP from IMP. The protein is Adenylosuccinate synthetase of Prochlorococcus marinus (strain MIT 9215).